Here is a 151-residue protein sequence, read N- to C-terminus: SsrA-binding protein (151 aa).

The segment at lysine 131–lysine 151 is disordered.

The protein belongs to the SmpB family.

The protein localises to the cytoplasm. Its function is as follows. Required for rescue of stalled ribosomes mediated by trans-translation. Binds to transfer-messenger RNA (tmRNA), required for stable association of tmRNA with ribosomes. tmRNA and SmpB together mimic tRNA shape, replacing the anticodon stem-loop with SmpB. tmRNA is encoded by the ssrA gene; the 2 termini fold to resemble tRNA(Ala) and it encodes a 'tag peptide', a short internal open reading frame. During trans-translation Ala-aminoacylated tmRNA acts like a tRNA, entering the A-site of stalled ribosomes, displacing the stalled mRNA. The ribosome then switches to translate the ORF on the tmRNA; the nascent peptide is terminated with the 'tag peptide' encoded by the tmRNA and targeted for degradation. The ribosome is freed to recommence translation, which seems to be the essential function of trans-translation. The sequence is that of SsrA-binding protein from Rickettsia bellii (strain OSU 85-389).